The chain runs to 104 residues: Large ribosomal subunit protein uL24 (104 aa).

Belongs to the universal ribosomal protein uL24 family. As to quaternary structure, part of the 50S ribosomal subunit.

One of two assembly initiator proteins, it binds directly to the 5'-end of the 23S rRNA, where it nucleates assembly of the 50S subunit. Functionally, one of the proteins that surrounds the polypeptide exit tunnel on the outside of the subunit. The sequence is that of Large ribosomal subunit protein uL24 from Citrobacter koseri (strain ATCC BAA-895 / CDC 4225-83 / SGSC4696).